A 963-amino-acid polypeptide reads, in one-letter code: Isoleucine--tRNA ligase (963 aa).

The short motif at 66–76 is the 'HIGH' region element; that stretch reads PYANGDIHIGH. Residue glutamate 596 participates in L-isoleucyl-5'-AMP binding. The 'KMSKS' region motif lies at 637–641; sequence KMSKS. Lysine 640 lines the ATP pocket. Residues cysteine 926, cysteine 929, cysteine 946, and cysteine 949 each coordinate Zn(2+).

It belongs to the class-I aminoacyl-tRNA synthetase family. IleS type 1 subfamily. In terms of assembly, monomer. The cofactor is Zn(2+).

It localises to the cytoplasm. It carries out the reaction tRNA(Ile) + L-isoleucine + ATP = L-isoleucyl-tRNA(Ile) + AMP + diphosphate. Catalyzes the attachment of isoleucine to tRNA(Ile). As IleRS can inadvertently accommodate and process structurally similar amino acids such as valine, to avoid such errors it has two additional distinct tRNA(Ile)-dependent editing activities. One activity is designated as 'pretransfer' editing and involves the hydrolysis of activated Val-AMP. The other activity is designated 'posttransfer' editing and involves deacylation of mischarged Val-tRNA(Ile). In Cupriavidus pinatubonensis (strain JMP 134 / LMG 1197) (Cupriavidus necator (strain JMP 134)), this protein is Isoleucine--tRNA ligase.